Consider the following 330-residue polypeptide: Biotin synthase (330 aa).

The Radical SAM core domain maps to 55 to 282 (NAVQRSTLLS…TAYVRLSAGR (228 aa)). 3 residues coordinate [4Fe-4S] cluster: Cys70, Cys74, and Cys77. The [2Fe-2S] cluster site is built by Cys114, Cys145, Cys205, and Arg277.

This sequence belongs to the radical SAM superfamily. Biotin synthase family. As to quaternary structure, homodimer. It depends on [4Fe-4S] cluster as a cofactor. [2Fe-2S] cluster is required as a cofactor.

The enzyme catalyses (4R,5S)-dethiobiotin + (sulfur carrier)-SH + 2 reduced [2Fe-2S]-[ferredoxin] + 2 S-adenosyl-L-methionine = (sulfur carrier)-H + biotin + 2 5'-deoxyadenosine + 2 L-methionine + 2 oxidized [2Fe-2S]-[ferredoxin]. It functions in the pathway cofactor biosynthesis; biotin biosynthesis; biotin from 7,8-diaminononanoate: step 2/2. Functionally, catalyzes the conversion of dethiobiotin (DTB) to biotin by the insertion of a sulfur atom into dethiobiotin via a radical-based mechanism. This chain is Biotin synthase, found in Methylibium petroleiphilum (strain ATCC BAA-1232 / LMG 22953 / PM1).